Consider the following 502-residue polypeptide: Zinc finger protein 488 (502 aa).

The 123-residue stretch at 8–130 (RSLWTNDSKI…EGEELLVWYD (123 aa)) folds into the SET domain. Tyr129 is a binding site for S-adenosyl-L-methionine. A C2H2-type 1; atypical zinc finger spans residues 151–174 (YTCTRCGQAFKNENPFLAHCRFLC). 2 disordered regions span residues 267–303 (SEPT…KSSR) and 338–361 (PSKR…LDSF). Positions 269 to 286 (PTDNAQTNESKISKNSAF) are enriched in polar residues. C2H2-type zinc fingers lie at residues 438–460 (NWCA…MRSH) and 479–501 (LTCP…MTSH).

It belongs to the krueppel C2H2-type zinc-finger protein family. Expressed in pMN progenitors and oligodendrocyte lineage cells in the embryo with expression declining in oligodendrocytes undergoing differentiation.

It localises to the nucleus. In terms of biological role, transcriptional repressor. May have histone methyltransferase activity. Negatively regulates shh signaling activity in pMN progenitor cells which prevents their switch from motor neuron to oligodendrocyte precursor cell production. Independently of shh activity, also regulates oligodendrocyte formation. The protein is Zinc finger protein 488 of Danio rerio (Zebrafish).